The sequence spans 247 residues: MTEHDTLVLIPARMAASRLPGKPLLDIAGLPMIAQVLRRAREARLGRVAVATDSAEIAAAVAAEGGEAVMTSADHPSGSDRIFEALEKLDGEGRIKTVINVQGDLPTIAPADIRAVLQPFAEPTVDIATLAAQIRVAAEHDNPNVVKVVGSPLSQDTLRALYFTRCTAPFGEGPRYHHIGLYAYRRTALARFVALPPSSLERREKLEQLRALEAGMRIDVRIVDSVPLGVDTPDDLEAARRILAKQA.

This sequence belongs to the KdsB family.

The protein resides in the cytoplasm. The enzyme catalyses 3-deoxy-alpha-D-manno-oct-2-ulosonate + CTP = CMP-3-deoxy-beta-D-manno-octulosonate + diphosphate. It functions in the pathway nucleotide-sugar biosynthesis; CMP-3-deoxy-D-manno-octulosonate biosynthesis; CMP-3-deoxy-D-manno-octulosonate from 3-deoxy-D-manno-octulosonate and CTP: step 1/1. The protein operates within bacterial outer membrane biogenesis; lipopolysaccharide biosynthesis. In terms of biological role, activates KDO (a required 8-carbon sugar) for incorporation into bacterial lipopolysaccharide in Gram-negative bacteria. This chain is 3-deoxy-manno-octulosonate cytidylyltransferase, found in Afipia carboxidovorans (strain ATCC 49405 / DSM 1227 / KCTC 32145 / OM5) (Oligotropha carboxidovorans).